The following is a 238-amino-acid chain: Uracil-DNA glycosylase (238 aa).

The Proton acceptor role is filled by Asp-72.

This sequence belongs to the uracil-DNA glycosylase (UDG) superfamily. UNG family.

The protein resides in the cytoplasm. It catalyses the reaction Hydrolyzes single-stranded DNA or mismatched double-stranded DNA and polynucleotides, releasing free uracil.. In terms of biological role, excises uracil residues from the DNA which can arise as a result of misincorporation of dUMP residues by DNA polymerase or due to deamination of cytosine. This chain is Uracil-DNA glycosylase, found in Chromobacterium violaceum (strain ATCC 12472 / DSM 30191 / JCM 1249 / CCUG 213 / NBRC 12614 / NCIMB 9131 / NCTC 9757 / MK).